The primary structure comprises 407 residues: Histone acetyltransferase mst2 (407 aa).

The MYST-type HAT domain occupies 98–372 (PQPTSIRYLY…VNPKLLRWTP (275 aa)). The C2HC MYST-type zinc finger occupies 131–156 (LYICESCLKYMNSDHVLQRHKMKCSW). Lys-198 carries the post-translational modification N6-acetyllysine; by autocatalysis. Acetyl-CoA is bound by residues 241 to 243 (ILT), Thr-243, and 248 to 254 (QRRGYGV). Glu-274 (proton donor/acceptor) is an active-site residue. 2 residues coordinate acetyl-CoA: Ser-278 and Ser-287.

The protein belongs to the MYST (SAS/MOZ) family. As to quaternary structure, component of the mst2 complex composed of at least eaf6, mst2, nto1, pdp3, ptf1, ptf2 and tfg3. Post-translationally, autoacetylation at Lys-198 is required for proper function.

The protein localises to the cytoplasm. The protein resides in the nucleus. The enzyme catalyses L-lysyl-[protein] + acetyl-CoA = N(6)-acetyl-L-lysyl-[protein] + CoA + H(+). In terms of biological role, component of the mst2 complex which is a highly specific H3 lysine 14 (H3K14) acetyltransferase that functions together with gcn5 to regulate global levels of H3K14 acetylation (H3K14ac), critical for DNA damage checkpoint activation. Negatively regulates telomere silencing. Telomere silencing is increased due to histone hypoacetylation and/or an increase in the ratio of methylated histones to acetylated histones. Telomeric histone acetylation contributes to normal meiotic progression. The sequence is that of Histone acetyltransferase mst2 (mst2) from Schizosaccharomyces pombe (strain 972 / ATCC 24843) (Fission yeast).